A 570-amino-acid polypeptide reads, in one-letter code: Multidrug and toxin extrusion protein 1 (570 aa).

Methionine 1 carries the post-translational modification N-acetylmethionine. Residues 1-37 are Cytoplasmic-facing; the sequence is MEAPEEPAPVRGGPEATLEIHGSRFLRLSAFREELRA. Residues 38–58 form a helical membrane-spanning segment; sequence LLVLAGPAFLVQLMVFLISFI. Topologically, residues 59-72 are extracellular; that stretch reads SSVFCGHLGKLELD. The helical transmembrane segment at 73–93 threads the bilayer; it reads AVTLAIAVINVTGVSVGFGLS. The Cytoplasmic portion of the chain corresponds to 94-120; that stretch reads SACDTLISQTYGSQNLKHVGVILQRSA. Residues 121-141 form a helical membrane-spanning segment; that stretch reads LILLLCCFPCWALFLNTQHIL. Residues 142–152 lie on the Extracellular side of the membrane; that stretch reads LLFRQDPDVSR. Residues 153–173 traverse the membrane as a helical segment; sequence LTQTYVTIFIPALPATFLYML. Residues 174 to 176 are Cytoplasmic-facing; that stretch reads QVK. A helical transmembrane segment spans residues 177–197; the sequence is YLLNQGIVLPQIVTGVAANLV. Residues 198 to 216 are Extracellular-facing; it reads NALANYLFLHQLHLGAIGS. Residues 217–237 form a helical membrane-spanning segment; the sequence is ALANLISQYTLALLLFFYILG. Residues 238-251 are Cytoplasmic-facing; the sequence is KKLHQATWGGWSLE. Residues 252–272 form a helical membrane-spanning segment; sequence CLQDWASFLHLAVPSMLMLCM. Topologically, residues 273–295 are extracellular; that stretch reads EWWAYEVGSFLSGILGMVELGAQ. The chain crosses the membrane as a helical span at residues 296 to 316; the sequence is SIVYELAIIVYMVPAGFSVAA. The Cytoplasmic portion of the chain corresponds to 317–336; sequence SVRVGNALGAGDMEQARKSS. A helical membrane pass occupies residues 337–357; sequence TVSLLITVLFAVAFSVLLLSC. At 358-370 the chain is on the extracellular side; the sequence is KDHVGYIFTTDRD. The chain crosses the membrane as a helical span at residues 371-391; that stretch reads IINLVAQVVPIYAVSHLFEAL. Over 392–408 the chain is Cytoplasmic; the sequence is ACTSGGVLRGSGNQKVG. Residues 409 to 429 traverse the membrane as a helical segment; sequence AIVNTIGYYVVGLPIGIALMF. At 430–437 the chain is on the extracellular side; that stretch reads ATKLGVMG. The chain crosses the membrane as a helical span at residues 438-458; sequence LWSGIIICTVFQAVCFLGFII. Residues 459-546 lie on the Cytoplasmic side of the membrane; that stretch reads QLNWKKACQQ…LSRKQLVLRR (88 aa). The disordered stretch occupies residues 508 to 534; that stretch reads DVGKTGETQSDQQMRQEEPLPEHPQDS. A compositionally biased stretch (basic and acidic residues) spans 521–533; that stretch reads MRQEEPLPEHPQD. Residues 547 to 567 traverse the membrane as a helical segment; the sequence is GLLLLGVFLILLVGILVRFYV. Topologically, residues 568 to 570 are extracellular; sequence RIQ.

It belongs to the multi antimicrobial extrusion (MATE) (TC 2.A.66.1) family.

It is found in the cell membrane. Its subcellular location is the apical cell membrane. The catalysed reaction is thiamine(out) + H(+)(in) = thiamine(in) + H(+)(out). It carries out the reaction estrone 3-sulfate(in) + H(+)(out) = estrone 3-sulfate(out) + H(+)(in). It catalyses the reaction creatinine(in) + H(+)(out) = creatinine(out) + H(+)(in). The enzyme catalyses agmatine(in) + H(+)(out) = agmatine(out) + H(+)(in). Multidrug efflux pump that functions as a H(+)/organic cation antiporter. Plays a physiological role in the excretion of cationic compounds including endogenous metabolites, drugs, toxins through the kidney and liver, into urine and bile respectively. Mediates the efflux of endogenous compounds such as creatinine, vitamin B1/thiamine, agmatine and estrone-3-sulfate. May also contribute to regulate the transport of cationic compounds in testis across the blood-testis-barrier. This is Multidrug and toxin extrusion protein 1 (SLC47A1) from Pongo abelii (Sumatran orangutan).